Here is a 248-residue protein sequence, read N- to C-terminus: MVSILDSSFKSKTEKKGAIVLLSGGLDSTTCLYLAAKDFGYPKNKKLPLLALSFDYSQKHKIELTKSKKIAKTLGIKHVIQKLDPGFFLGSSLTESKIKVRKNAKSLFSGDETEIPNTYVPGRNILFLSFALSLAEGHGYDSIYIGVNALDYSGYPDCRPEFIDSFQKMANLGTKKGVSGTGDSIQIKTPLLHLGKKEIIELGMSVGAPLGLTHSCYDPVSGKPCGKCDSCILRAKGFLEVGLKDPAL.

L22–L32 is a binding site for ATP. 4 residues coordinate Zn(2+): C216, C225, C228, and C231.

The protein belongs to the QueC family. The cofactor is Zn(2+).

The enzyme catalyses 7-carboxy-7-deazaguanine + NH4(+) + ATP = 7-cyano-7-deazaguanine + ADP + phosphate + H2O + H(+). It functions in the pathway purine metabolism; 7-cyano-7-deazaguanine biosynthesis. In terms of biological role, catalyzes the ATP-dependent conversion of 7-carboxy-7-deazaguanine (CDG) to 7-cyano-7-deazaguanine (preQ(0)). The sequence is that of 7-cyano-7-deazaguanine synthase from Leptospira biflexa serovar Patoc (strain Patoc 1 / Ames).